The sequence spans 1031 residues: Formin-binding protein 4 (1031 aa).

Disordered stretches follow at residues 1–102 (MMGK…TTRP), 116–143 (AYAD…NQAT), and 166–205 (APVV…QTPG). A Phosphoserine modification is found at S19. 2 stretches are compositionally biased toward low complexity: residues 41–73 (DSTA…APED) and 83–92 (VVEVPNVVQN). Phosphoserine occurs at positions 120, 125, and 128. The segment covering 134 to 143 (SKEANGNQAT) has biased composition (polar residues). Position 176 is a phosphothreonine (T176). The span at 190 to 203 (LSPTASNGSDTAQT) shows a compositional bias: polar residues. Residues 218-252 (EIEMGDWQEVWDENTGCYYYWNTQTNEVTWELPQY) enclose the WW 1 domain. K294 carries the post-translational modification N6-acetyllysine. A Glycyl lysine isopeptide (Lys-Gly) (interchain with G-Cter in SUMO1) cross-link involves residue K305. Residue K339 forms a Glycyl lysine isopeptide (Lys-Gly) (interchain with G-Cter in SUMO2) linkage. K352 participates in a covalent cross-link: Glycyl lysine isopeptide (Lys-Gly) (interchain with G-Cter in SUMO1); alternate. K352 is covalently cross-linked (Glycyl lysine isopeptide (Lys-Gly) (interchain with G-Cter in SUMO2); alternate). A disordered region spans residues 355–518 (DPVSETKETS…KETEVEESSE (164 aa)). Residues 400–414 (ESEEEEEEEEQDTLE) are compositionally biased toward acidic residues. The segment covering 418–430 (ALERKKAELRALE) has biased composition (basic and acidic residues). S435, S440, S443, S446, and S450 each carry phosphoserine. The segment covering 436-450 (VSGSSPRSDISQPAS) has biased composition (polar residues). Basic residues predominate over residues 457 to 466 (IMSKRGKWKM). A compositionally biased stretch (low complexity) spans 469–482 (RATSPESTSRSSSK). 3 positions are modified to phosphoserine: S472, S507, and S516. Basic and acidic residues predominate over residues 499–518 (DSEKIDEISDKETEVEESSE). K527 is covalently cross-linked (Glycyl lysine isopeptide (Lys-Gly) (interchain with G-Cter in SUMO1); alternate). Residue K527 forms a Glycyl lysine isopeptide (Lys-Gly) (interchain with G-Cter in SUMO2); alternate linkage. In terms of domain architecture, WW 2 spans 603–637 (NATPKGWSCHWDRDHRRYFYVNEQSGESQWEFPDG). Disordered regions lie at residues 629 to 681 (ESQW…SLCK), 712 to 813 (PLPL…VQRS), and 900 to 994 (PAQA…RIEE). Residues 643 to 663 (SQTKEVRDESLPKLTVKDKTC) are compositionally biased toward basic and acidic residues. The segment covering 664 to 677 (TDPNSTESSENPTG) has biased composition (polar residues). Over residues 712–741 (PLPLEMPPPPPPPPESPPPPPPPPPPPPPL) the composition is skewed to pro residues. Residues 742 to 757 (EDGEIQEVEMEDEGSE) show a composition bias toward acidic residues. The span at 771–794 (KPSTQTTAVTSQSLVDSTASSPPS) shows a compositional bias: polar residues. Positions 913–939 (VEPPPPPPPPPTPTPPPPPPAPKVPPP) are enriched in pro residues. Positions 943 to 955 (RKGKKDKAKKSKT) are enriched in basic residues. Residues 971–984 (LDEEDNSSSSEEDR) show a composition bias toward acidic residues. A phosphoserine mark is found at S977, S978, and S979. The segment covering 985-994 (ESTAQKRIEE) has biased composition (basic and acidic residues).

As to quaternary structure, binds FMN1. Interacts with the Arg/Gly-rich-flanked Pro-rich regions of KHDRBS1/SAM68. Arginine methylation in these regions has no effect on this binding. As to expression, ubiquitous. Highest levels in spleen and thymus.

In Mus musculus (Mouse), this protein is Formin-binding protein 4 (Fnbp4).